A 700-amino-acid polypeptide reads, in one-letter code: Elongation factor G 2 (700 aa).

The tr-type G domain occupies 8–290; it reads ERYRNIGISA…AVLDFLPSPI (283 aa). GTP is bound by residues 17–24, 88–92, and 142–145; these read AHIDAGKT, DTPGH, and NKMD.

This sequence belongs to the TRAFAC class translation factor GTPase superfamily. Classic translation factor GTPase family. EF-G/EF-2 subfamily.

The protein resides in the cytoplasm. Catalyzes the GTP-dependent ribosomal translocation step during translation elongation. During this step, the ribosome changes from the pre-translocational (PRE) to the post-translocational (POST) state as the newly formed A-site-bound peptidyl-tRNA and P-site-bound deacylated tRNA move to the P and E sites, respectively. Catalyzes the coordinated movement of the two tRNA molecules, the mRNA and conformational changes in the ribosome. The sequence is that of Elongation factor G 2 from Paraburkholderia xenovorans (strain LB400).